The following is a 486-amino-acid chain: Achaete-scute complex protein T8 (486 aa).

Disordered stretches follow at residues 1–26 (MAAL…GIKT) and 75–158 (AAST…LPLP). The segment covering 75–86 (AASTTNTTPISS) has biased composition (polar residues). In terms of domain architecture, bHLH spans 159-223 (QAVARRNARE…RMAVEYIRSL (65 aa)).

In terms of assembly, efficient DNA binding requires dimerization with another bHLH protein. As to expression, l(1)SC, SC and AC strongly label the presumptive stomatogastric nervous system, while ASE is more prominent in the presumptive procephalic lobe.

Involved in the determination of the neuronal precursors of optic lobes in the central nervous system. The chain is Achaete-scute complex protein T8 (ase) from Drosophila melanogaster (Fruit fly).